Reading from the N-terminus, the 475-residue chain is MSPQTETKASVGFKAGVKDYKLTYYTPDYVTKDTDILAAFRVTPQPGVPPEEAGAAVAAESSTGTWTAVWTDGLTSLDRYKGRCYNIEPVAGEENQYICYVAYPLDLFEEGSVTNMFTSIVGNVFGFKALRALRLEDLRIPPAYTKTFQGPPHGIQVERDKLNKYGRPLLGCTIKPKLGLSAKNYGRAVYECLRGGLDFTKDDENVNSQPFMRWRDRFLFCAEALYKAQAETGEIKGHYLNATAGTCEEMLKRAVFARELGVPIVMHDYLTGGFTANTTLAHYCRDNGLLLHIHRAMHAVIDRQKNHGMHFRVLAKALRLSGGDHIHAGTVVGKLEGERDITLGFVDLLRDDFVEKDRSRGIYFTQDWVSIPGVIPVASGGIHVWHMPALTEIFGDDSVLQFGGGTLGHPWGNAPGAVANRVALEACVQARNEGRDLAREGNEIIREASKWSPELAAACEVWKSIKFEFAAMDTL.

Residues 1 to 2 (MS) constitute a propeptide that is removed on maturation. Pro-3 bears the N-acetylproline mark. An N6,N6,N6-trimethyllysine modification is found at Lys-14. Substrate-binding residues include Asn-123 and Thr-173. Residue Lys-175 is the Proton acceptor of the active site. Position 177 (Lys-177) interacts with substrate. 3 residues coordinate Mg(2+): Lys-201, Asp-203, and Glu-204. Lys-201 carries the post-translational modification N6-carboxylysine. His-294 serves as the catalytic Proton acceptor. Arg-295, His-327, and Ser-379 together coordinate substrate.

It belongs to the RuBisCO large chain family. Type I subfamily. In terms of assembly, heterohexadecamer of 8 large chains and 8 small chains; disulfide-linked. The disulfide link is formed within the large subunit homodimers. Requires Mg(2+) as cofactor. Post-translationally, the disulfide bond which can form in the large chain dimeric partners within the hexadecamer appears to be associated with oxidative stress and protein turnover.

The protein resides in the plastid. Its subcellular location is the chloroplast. It carries out the reaction 2 (2R)-3-phosphoglycerate + 2 H(+) = D-ribulose 1,5-bisphosphate + CO2 + H2O. It catalyses the reaction D-ribulose 1,5-bisphosphate + O2 = 2-phosphoglycolate + (2R)-3-phosphoglycerate + 2 H(+). Its function is as follows. RuBisCO catalyzes two reactions: the carboxylation of D-ribulose 1,5-bisphosphate, the primary event in carbon dioxide fixation, as well as the oxidative fragmentation of the pentose substrate in the photorespiration process. Both reactions occur simultaneously and in competition at the same active site. This chain is Ribulose bisphosphate carboxylase large chain, found in Citrus sinensis (Sweet orange).